The primary structure comprises 219 residues: tRNA (guanine-N(7)-)-methyltransferase (219 aa).

S-adenosyl-L-methionine contacts are provided by Glu44, Asp69, Glu102, and Asn125. Residues Lys129 and Asp161 each contribute to the substrate site.

The protein belongs to the class I-like SAM-binding methyltransferase superfamily. TrmB family.

The enzyme catalyses guanosine(46) in tRNA + S-adenosyl-L-methionine = N(7)-methylguanosine(46) in tRNA + S-adenosyl-L-homocysteine. It participates in tRNA modification; N(7)-methylguanine-tRNA biosynthesis. Functionally, catalyzes the formation of N(7)-methylguanine at position 46 (m7G46) in tRNA. The chain is tRNA (guanine-N(7)-)-methyltransferase from Clostridium perfringens (strain SM101 / Type A).